Reading from the N-terminus, the 392-residue chain is Speckle-type POZ protein-like B (392 aa).

Positions 31 to 161 (KFSYMWTINN…DDKLTLFCEV (131 aa)) constitute an MATH domain. Positions 200–267 (TDCSLFVGGQ…IYTGKAPNLE (68 aa)) constitute a BTB domain.

It belongs to the Tdpoz family. As to quaternary structure, homodimer. Heterodimer with SPOP. Component of cullin-RING-based BCR (BTB-CUL3-RBX1) E3 ubiquitin-protein ligase complexes containing homodimeric SPOPL or the heterodimer formed by SPOP and SPOPL.

It localises to the nucleus. It functions in the pathway protein modification; protein ubiquitination. Functionally, component of a cullin-RING-based BCR (BTB-CUL3-RBX1) E3 ubiquitin-protein ligase complex that mediates the ubiquitination and subsequent proteasomal degradation of target proteins, but with relatively low efficiency. This chain is Speckle-type POZ protein-like B (spoplb), found in Danio rerio (Zebrafish).